The primary structure comprises 59 residues: Large ribosomal subunit protein uL30 (59 aa).

This sequence belongs to the universal ribosomal protein uL30 family. As to quaternary structure, part of the 50S ribosomal subunit.

This is Large ribosomal subunit protein uL30 from Clostridium botulinum (strain Alaska E43 / Type E3).